A 714-amino-acid chain; its full sequence is Fatty acid oxidation complex subunit alpha (714 aa).

The enoyl-CoA hydratase stretch occupies residues 1–190 (MEMASAFTLN…KLGLVDDVVP (190 aa)). The 3-hydroxyacyl-CoA dehydrogenase stretch occupies residues 306–714 (APLNSVGILG…FWKTTATDLQ (409 aa)).

This sequence in the N-terminal section; belongs to the enoyl-CoA hydratase/isomerase family. The protein in the central section; belongs to the 3-hydroxyacyl-CoA dehydrogenase family. Heterotetramer of two alpha chains (FadJ) and two beta chains (FadI).

The protein resides in the cytoplasm. It catalyses the reaction a (3S)-3-hydroxyacyl-CoA = a (2E)-enoyl-CoA + H2O. The catalysed reaction is a 4-saturated-(3S)-3-hydroxyacyl-CoA = a (3E)-enoyl-CoA + H2O. The enzyme catalyses a (3S)-3-hydroxyacyl-CoA + NAD(+) = a 3-oxoacyl-CoA + NADH + H(+). It carries out the reaction (3S)-3-hydroxybutanoyl-CoA = (3R)-3-hydroxybutanoyl-CoA. The protein operates within lipid metabolism; fatty acid beta-oxidation. Its function is as follows. Catalyzes the formation of a hydroxyacyl-CoA by addition of water on enoyl-CoA. Also exhibits 3-hydroxyacyl-CoA epimerase and 3-hydroxyacyl-CoA dehydrogenase activities. This is Fatty acid oxidation complex subunit alpha from Escherichia coli O7:K1 (strain IAI39 / ExPEC).